The sequence spans 777 residues: DNA repair helicase/translocase XPB-R (777 aa).

Positions 212 to 416 (AASDGALRSG…DLFHLVGPKL (205 aa)) constitute a Helicase ATP-binding domain. An ATP-binding site is contributed by 225–232 (LPCGSGKT). The DEVH box motif lies at 369–372 (DEVH). Residues 484 to 631 (IVKRHVAESS…GYTCSVTEFN (148 aa)) enclose the Helicase C-terminal domain.

Belongs to the helicase family. RAD25/XPB subfamily.

It carries out the reaction Couples ATP hydrolysis with the unwinding of duplex DNA by translocating in the 3'-5' direction.. The enzyme catalyses ATP + H2O = ADP + phosphate + H(+). Its function is as follows. ATP-dependent 3'-5' DNA helicase/translocase; binds dsDNA rather than ssDNA, unzipping it in a translocase rather than classical helicase activity. Involved in nucleotide excision repair (NER) of damaged DNA. XPB-R is a paralog of XBP, but is not a component of the TFIIH basal transcription factor and is dispensable for RNA polymerase II transcription. This chain is DNA repair helicase/translocase XPB-R, found in Trypanosoma brucei brucei (strain 927/4 GUTat10.1).